Here is a 164-residue protein sequence, read N- to C-terminus: 16S rRNA aminocarboxypropyltransferase (164 aa).

S-adenosyl-L-methionine contacts are provided by T18, I66, L87, and S106.

Belongs to the TDD superfamily. TSR3 family.

It localises to the cytoplasm. It catalyses the reaction an N(1)-methylpseudouridine in rRNA + S-adenosyl-L-methionine = N(1)-methyl-N(3)-[(3S)-3-amino-3-carboxypropyl]pseudouridine in rRNA + S-methyl-5'-thioadenosine + H(+). Functionally, aminocarboxypropyltransferase that catalyzes the aminocarboxypropyl transfer on pseudouridine corresponding to position 914 in M.jannaschii 16S rRNA. It constitutes the last step in biosynthesis of the hypermodified N1-methyl-N3-(3-amino-3-carboxypropyl) pseudouridine (m1acp3-Psi). The protein is 16S rRNA aminocarboxypropyltransferase of Thermoplasma volcanium (strain ATCC 51530 / DSM 4299 / JCM 9571 / NBRC 15438 / GSS1).